The primary structure comprises 379 residues: MINLLDFNKTGLIHFCEEMGEKPYRARQLLRWVHRFGKTEFIEMSDLAKTFRQKLMERAVVHPPEIISDHTAGDGTRKWLLSTGTGNAVEMVFIPEPNRGTLCVSSQVGCALACSFCSTGRQGFNRNLSVAEIIGQLWWANRLLEGQVGELFSPDVAQIRADNTDTRRPVTNVVMMGMGEPLANFENVVTALDLMLSDDAYGLSRRRVTVSTSGLVPALDRLRERCPVALAVSLHAPNDALRDQLVPINKKYPIRDLLAACERYLPAAPRDFITFEYVMLRDVNDSIALARELVQVVRNIPCKLNLIPFNTFAGSGYERSNTDAIDNFRDVLMQAGIVTTVRKTRGDDIAAACGQLAGQVKDKTRRTGTCGSGRAVVTG.

Catalysis depends on E90, which acts as the Proton acceptor. Positions 96-348 constitute a Radical SAM core domain; the sequence is EPNRGTLCVS…TTVRKTRGDD (253 aa). The cysteines at positions 103 and 353 are disulfide-linked. C110, C114, and C117 together coordinate [4Fe-4S] cluster. S-adenosyl-L-methionine-binding positions include 179–180, S211, 233–235, and N310; these read GE and SLH. Catalysis depends on C353, which acts as the S-methylcysteine intermediate.

The protein belongs to the radical SAM superfamily. RlmN family. Requires [4Fe-4S] cluster as cofactor.

The protein localises to the cytoplasm. It carries out the reaction adenosine(2503) in 23S rRNA + 2 reduced [2Fe-2S]-[ferredoxin] + 2 S-adenosyl-L-methionine = 2-methyladenosine(2503) in 23S rRNA + 5'-deoxyadenosine + L-methionine + 2 oxidized [2Fe-2S]-[ferredoxin] + S-adenosyl-L-homocysteine. The catalysed reaction is adenosine(37) in tRNA + 2 reduced [2Fe-2S]-[ferredoxin] + 2 S-adenosyl-L-methionine = 2-methyladenosine(37) in tRNA + 5'-deoxyadenosine + L-methionine + 2 oxidized [2Fe-2S]-[ferredoxin] + S-adenosyl-L-homocysteine. Specifically methylates position 2 of adenine 2503 in 23S rRNA and position 2 of adenine 37 in tRNAs. m2A2503 modification seems to play a crucial role in the proofreading step occurring at the peptidyl transferase center and thus would serve to optimize ribosomal fidelity. This Nitrosomonas eutropha (strain DSM 101675 / C91 / Nm57) protein is Dual-specificity RNA methyltransferase RlmN.